The sequence spans 642 residues: Bifunctional protein glk (642 aa).

The segment at 1-340 (MSTGAQSKAV…QLSNRSGGAS (340 aa)) is glucokinase. 23–28 (ADVGGT) lines the ATP pocket. An HTH rpiR-type domain is found at 341-417 (SAVFERIRQM…LKLATGLTGT (77 aa)). A putative HTH-type transcriptional regulator region spans residues 341–642 (SAVFERIRQM…SPAAKDVARD (302 aa)). The segment at residues 377 to 396 (IVDIARKADVSQPTVIRFCR) is a DNA-binding region (H-T-H motif). An SIS domain is found at 461-600 (AIEILNGARR…AVGVAIRRAS (140 aa)). A helical transmembrane segment spans residues 576-596 (SMISRILHLLMIDILAVGVAI).

This sequence in the N-terminal section; belongs to the bacterial glucokinase family.

The protein resides in the membrane. The catalysed reaction is D-glucose + ATP = D-glucose 6-phosphate + ADP + H(+). The protein is Bifunctional protein glk (glk) of Burkholderia orbicola (strain AU 1054).